We begin with the raw amino-acid sequence, 554 residues long: Cytochrome c oxidase subunit 1-alpha (554 aa).

The helical transmembrane segment at 26 to 56 (KDIGVLYLFTAGLAGLISVTLTVYMRMELQH) threads the bilayer. The cysteines at positions 63 and 77 are disulfide-linked. Helical transmembrane passes span 81 to 118 (AHLW…LHIG), 127 to 148 (LNNL…SLLS), 175 to 203 (AMDL…TFLN), 215 to 248 (PLFA…DRNF), 260 to 295 (DPVL…STFA), and 301 to 319 (GYLP…GFIV). His91 is a Fe(II)-heme a binding site. Cu cation-binding residues include His273 and Tyr277. Residues 273 to 277 (HPEVY) constitute a cross-link (1'-histidyl-3'-tyrosine (His-Tyr)). Residues His322 and His323 each contribute to the Cu cation site. Helical transmembrane passes span 331–359 (LTQQ…IATM), 367–390 (KTPM…VIAQ), 399–425 (DTYY…GTYY), 436–463 (PEWA…FLGR), and 478–508 (SYWN…TLFA). Position 406 (His406) interacts with heme a3. His408 lines the Fe(II)-heme a pocket.

It belongs to the heme-copper respiratory oxidase family. It depends on Cu(2+) as a cofactor. Requires heme as cofactor.

It localises to the cell inner membrane. It carries out the reaction 4 Fe(II)-[cytochrome c] + O2 + 8 H(+)(in) = 4 Fe(III)-[cytochrome c] + 2 H2O + 4 H(+)(out). Its pathway is energy metabolism; oxidative phosphorylation. Subunit I and II form the functional core of the enzyme complex. Electrons originating in cytochrome c are transferred via heme a and Cu(A) to the binuclear center formed by heme a3 and Cu(B). This cytochrome c oxidase shows proton pump activity across the membrane in addition to the electron transfer. The polypeptide is Cytochrome c oxidase subunit 1-alpha (ctaDI) (Paracoccus denitrificans).